A 136-amino-acid polypeptide reads, in one-letter code: Large ribosomal subunit protein uL16 (136 aa).

The protein belongs to the universal ribosomal protein uL16 family. As to quaternary structure, part of the 50S ribosomal subunit.

Binds 23S rRNA and is also seen to make contacts with the A and possibly P site tRNAs. This chain is Large ribosomal subunit protein uL16, found in Buchnera aphidicola subsp. Baizongia pistaciae (strain Bp).